The sequence spans 199 residues: Probable GTP-binding protein EngB (199 aa).

An EngB-type G domain is found at 28-199 (DLPEIALAGR…ESWDTILEYL (172 aa)). GTP-binding positions include 36–43 (GRSNVGKS), 63–67 (GKTQL), 81–84 (DVPG), 148–151 (TKAD), and 180–182 (FSS). Positions 43 and 65 each coordinate Mg(2+).

It belongs to the TRAFAC class TrmE-Era-EngA-EngB-Septin-like GTPase superfamily. EngB GTPase family. Requires Mg(2+) as cofactor.

Its function is as follows. Necessary for normal cell division and for the maintenance of normal septation. In Streptococcus equi subsp. equi (strain 4047), this protein is Probable GTP-binding protein EngB.